The primary structure comprises 173 residues: Nicotinamide-nucleotide adenylyltransferase (173 aa).

It belongs to the archaeal NMN adenylyltransferase family.

It is found in the cytoplasm. It carries out the reaction beta-nicotinamide D-ribonucleotide + ATP + H(+) = diphosphate + NAD(+). The protein operates within cofactor biosynthesis; NAD(+) biosynthesis; NAD(+) from nicotinamide D-ribonucleotide: step 1/1. In Methanolobus tindarius, this protein is Nicotinamide-nucleotide adenylyltransferase (ffdC).